A 590-amino-acid polypeptide reads, in one-letter code: Cytidine monophosphate-N-acetylneuraminic acid hydroxylase (590 aa).

Residues 14–112 (LSPVEVANLK…VEMDENNGLL (99 aa)) form the Rieske domain. [2Fe-2S] cluster-binding residues include cysteine 54, histidine 56, cysteine 75, and histidine 78.

Belongs to the CMP-Neu5Ac hydroxylase family. Requires [2Fe-2S] cluster as cofactor.

The protein resides in the cytoplasm. It carries out the reaction CMP-N-acetyl-beta-neuraminate + 2 Fe(II)-[cytochrome b5] + O2 + 2 H(+) = CMP-N-glycoloyl-beta-neuraminate + 2 Fe(III)-[cytochrome b5] + H2O. Its pathway is amino-sugar metabolism; N-acetylneuraminate metabolism. Sialic acids are components of carbohydrate chains of glycoconjugates and are involved in cell-cell recognition and cell-pathogen interactions. Catalyzes the conversion of CMP-N-acetylneuraminic acid (CMP-Neu5Ac) into its hydroxylated derivative CMP-N-glycolylneuraminic acid (CMP-Neu5Gc), a sialic acid abundantly expressed at the surface of many cells. The sequence is that of Cytidine monophosphate-N-acetylneuraminic acid hydroxylase (CMAH) from Macaca mulatta (Rhesus macaque).